We begin with the raw amino-acid sequence, 71 residues long: Protein SlyX homolog (71 aa).

Belongs to the SlyX family.

The chain is Protein SlyX homolog from Rhodopseudomonas palustris (strain BisB5).